A 248-amino-acid polypeptide reads, in one-letter code: MESNSIIWSLLLASALISSFSVNAQGPAASPVTSTTTAPPPTTAAPPTTAAPPPTTTTPPVSAAQPPASPVTPPPAVTPTSPPAPKVAPVISPATPPPQPPQSPPASAPTVSPPPVSPPPAPTSPPPTPASPPPAPASPPPAPASPPPAPVSPPPVQAPSPISLPPAPAPAPTKHKRKHKHKRHHHAPAPAPIPPSPPSPPVLTDPQDTAPAPSPNTNGGNALNQLKGRAVMWLNTGLVILFLLAMTA.

An N-terminal signal peptide occupies residues 1–24; it reads MESNSIIWSLLLASALISSFSVNA. The segment covering 25–37 has biased composition (low complexity); the sequence is QGPAASPVTSTTT. Residues 25–221 are disordered; it reads QGPAASPVTS…APSPNTNGGN (197 aa). Composition is skewed to pro residues over residues 38 to 57, 67 to 86, and 94 to 171; these read APPPTTAAPPTTAAPPPTTT, PASPVTPPPAVTPTSPPAPK, and ATPP…PAPA. A compositionally biased stretch (basic residues) spans 173–187; sequence TKHKRKHKHKRHHHA. A compositionally biased stretch (pro residues) spans 189 to 203; the sequence is APAPIPPSPPSPPVL. Residue serine 196 is the site of GPI-anchor amidated serine attachment. Positions 197–248 are cleaved as a propeptide — removed in mature form; it reads PPSPPVLTDPQDTAPAPSPNTNGGNALNQLKGRAVMWLNTGLVILFLLAMTA.

The protein belongs to the lysine-rich AGP family. In terms of processing, O-glycosylated on the hydroxyproline residues. Strongly expressed in stems, moderately expressed in flowers and roots and weakly expressed in young leaves.

The protein localises to the cell membrane. Its function is as follows. Proteoglycan that seems to be implicated in diverse developmental roles such as differentiation, cell-cell recognition, embryogenesis and programmed cell death. In Arabidopsis thaliana (Mouse-ear cress), this protein is Lysine-rich arabinogalactan protein 19 (AGP19).